Consider the following 127-residue polypeptide: Large ribosomal subunit protein bL12 (127 aa).

Belongs to the bacterial ribosomal protein bL12 family. Homodimer. Part of the ribosomal stalk of the 50S ribosomal subunit. Forms a multimeric L10(L12)X complex, where L10 forms an elongated spine to which 2 to 4 L12 dimers bind in a sequential fashion. Binds GTP-bound translation factors.

In terms of biological role, forms part of the ribosomal stalk which helps the ribosome interact with GTP-bound translation factors. Is thus essential for accurate translation. The protein is Large ribosomal subunit protein bL12 of Streptomyces coelicolor (strain ATCC BAA-471 / A3(2) / M145).